We begin with the raw amino-acid sequence, 395 residues long: Carbohydrate sulfotransferase 6 (395 aa).

The Cytoplasmic portion of the chain corresponds to 1-5 (MWLPR). A helical; Signal-anchor for type II membrane protein membrane pass occupies residues 6-26 (VSSTAVTALLLAQTFLLLFLV). Topologically, residues 27–395 (SRPGPSSPAG…ASSTASHPRN (369 aa)) are lumenal. 49–55 (WRSGSSF) lines the 3'-phosphoadenylyl sulfate pocket. N-linked (GlcNAc...) asparagine glycosylation is present at Asn-116. 202-210 (RDPRAVLRS) contributes to the 3'-phosphoadenylyl sulfate binding site. 3 N-linked (GlcNAc...) asparagine glycosylation sites follow: Asn-229, Asn-305, and Asn-328.

It belongs to the sulfotransferase 1 family. Gal/GlcNAc/GalNAc subfamily. In terms of tissue distribution, expressed in cornea. Mainly expressed in brain. Also expressed in spinal cord and trachea.

Its subcellular location is the golgi apparatus membrane. It carries out the reaction 3'-phosphoadenylyl sulfate + keratan = adenosine 3',5'-bisphosphate + keratan 6'-sulfate.. In terms of biological role, sulfotransferase that utilizes 3'-phospho-5'-adenylyl sulfate (PAPS) as sulfonate donor to catalyze the transfer of sulfate to position 6 of non-reducing N-acetylglucosamine (GlcNAc) residues of keratan. Cooperates with B4GALT4 galactosyltransferase and B3GNT7 N-acetylglucosaminyltransferase to construct and elongate the sulfated disaccharide unit [-&gt;3Galbeta1-&gt;4(6-sulfoGlcNAcbeta)1-&gt;] within keratan sulfate polymer. Involved in biosynthesis of keratan sulfate in cornea, with an impact on proteoglycan fibril organization and corneal transparency. Involved in sulfation of endothelial mucins such as GLYCAM1. The protein is Carbohydrate sulfotransferase 6 of Homo sapiens (Human).